A 646-amino-acid chain; its full sequence is Type I inositol polyphosphate 5-phosphatase 2 (646 aa).

A compositionally biased stretch (basic and acidic residues) spans 59–74; that stretch reads TDEDSHNGRRGSEADH. 3 disordered regions span residues 59-99, 185-207, and 329-369; these read TDED…GKSE, ESVYDQSPSCNNNALHRSHSAPS, and IDNR…IRNS. Residues 188–207 are compositionally biased toward polar residues; the sequence is YDQSPSCNNNALHRSHSAPS. A compositionally biased stretch (basic and acidic residues) spans 341–350; sequence EAAKIMHDDS. 2 catalytic regions span residues 495–510 and 575–590; these read DQVFWFGDLNYRLNMS and KKRAPAWCDRILWLGK.

This sequence belongs to the inositol polyphosphate 5-phosphatase family. In terms of tissue distribution, expressed ubiquitously.

It catalyses the reaction 1D-myo-inositol 1,4,5-trisphosphate + H2O = 1D-myo-inositol 1,4-bisphosphate + phosphate. The catalysed reaction is 1D-myo-inositol 1,3,4,5-tetrakisphosphate + H2O = 1D-myo-inositol 1,3,4-trisphosphate + phosphate. Functionally, has phosphatase activity toward Ins(1,4,5)P3 and Ins(1,3,4,5)P4. Seems to be involved in the abscisic acid (ABA) signaling pathway. Could also be able to hydrolyze PtdIns(4,5)P2 and PtdIns(3,4,5)P3. The protein is Type I inositol polyphosphate 5-phosphatase 2 of Arabidopsis thaliana (Mouse-ear cress).